The primary structure comprises 146 residues: Hemoglobin subunit beta (146 aa).

At V1 the chain carries N-acetylvaline. One can recognise a Globin domain in the interval 2–146 (HLTDAEKNLV…VANALAHKYH (145 aa)). H63 is a binding site for heme b. K82 bears the N6-acetyllysine mark. Heme b is bound at residue H92. C93 is subject to S-nitrosocysteine. K144 bears the N6-acetyllysine mark.

Belongs to the globin family. As to quaternary structure, heterotetramer of two alpha chains and two beta chains. Red blood cells.

Functionally, involved in oxygen transport from the lung to the various peripheral tissues. The polypeptide is Hemoglobin subunit beta (HBB) (Mesocricetus brandti (Brandt's hamster)).